The following is a 363-amino-acid chain: Flagellar P-ring protein (363 aa).

An N-terminal signal peptide occupies residues 1-20 (MKLKLILAVAMLAFSLPSQA).

It belongs to the FlgI family. In terms of assembly, the basal body constitutes a major portion of the flagellar organelle and consists of four rings (L,P,S, and M) mounted on a central rod.

It is found in the periplasm. It localises to the bacterial flagellum basal body. Its function is as follows. Assembles around the rod to form the L-ring and probably protects the motor/basal body from shearing forces during rotation. In Shewanella sp. (strain MR-7), this protein is Flagellar P-ring protein.